Reading from the N-terminus, the 437-residue chain is UDP-N-acetylmuramate--L-alanine ligase (437 aa).

Residue 114–120 (GTHGKTS) coordinates ATP.

The protein belongs to the MurCDEF family.

It localises to the cytoplasm. It catalyses the reaction UDP-N-acetyl-alpha-D-muramate + L-alanine + ATP = UDP-N-acetyl-alpha-D-muramoyl-L-alanine + ADP + phosphate + H(+). Its pathway is cell wall biogenesis; peptidoglycan biosynthesis. Functionally, cell wall formation. This is UDP-N-acetylmuramate--L-alanine ligase from Lactobacillus acidophilus (strain ATCC 700396 / NCK56 / N2 / NCFM).